A 621-amino-acid polypeptide reads, in one-letter code: KIF-binding protein (621 aa).

The tract at residues Gly51 to Gly75 is disordered. Positions Pro54–Asp65 are enriched in acidic residues. Ser178 carries the post-translational modification Phosphoserine.

Belongs to the KIF-binding protein family. Interacts with KIF1B; positively regulates KIF1B microtubule motor activity. Interacts with STMN2. In terms of tissue distribution, highly expressed in heart, brain, ovary, testis, spinal cord and all specific brain regions examined. Moderate expressed at intermediate level in all other adult tissues examined, as well as in fetal liver and brain. Not expressed in blood leukocytes.

It localises to the cytoplasm. The protein localises to the cytoskeleton. In terms of biological role, activator of KIF1B plus-end-directed microtubule motor activity. Required for organization of axonal microtubules, and axonal outgrowth and maintenance during peripheral and central nervous system development. The polypeptide is KIF-binding protein (Homo sapiens (Human)).